The following is a 375-amino-acid chain: N-acetyldiaminopimelate deacetylase (375 aa).

Asp69 is an active-site residue. Residue Glu128 is the Proton acceptor of the active site.

It belongs to the peptidase M20A family. N-acetyldiaminopimelate deacetylase subfamily.

The enzyme catalyses N-acetyl-(2S,6S)-2,6-diaminopimelate + H2O = (2S,6S)-2,6-diaminopimelate + acetate. It functions in the pathway amino-acid biosynthesis; L-lysine biosynthesis via DAP pathway; LL-2,6-diaminopimelate from (S)-tetrahydrodipicolinate (acetylase route): step 3/3. In terms of biological role, catalyzes the conversion of N-acetyl-diaminopimelate to diaminopimelate and acetate. The polypeptide is N-acetyldiaminopimelate deacetylase (Priestia megaterium (strain ATCC 12872 / QMB1551) (Bacillus megaterium)).